Reading from the N-terminus, the 439-residue chain is uncharacterized protein (439 aa).

Residues 1-19 (MKKLLLTASIICLASAGLA) form the signal peptide.

This is an uncharacterized protein from Rickettsia felis (strain ATCC VR-1525 / URRWXCal2) (Rickettsia azadi).